The following is a 1392-amino-acid chain: DNA-directed RNA polymerase subunit beta (1392 aa).

Belongs to the RNA polymerase beta chain family. As to quaternary structure, the RNAP catalytic core consists of 2 alpha, 1 beta, 1 beta' and 1 omega subunit. When a sigma factor is associated with the core the holoenzyme is formed, which can initiate transcription.

The enzyme catalyses RNA(n) + a ribonucleoside 5'-triphosphate = RNA(n+1) + diphosphate. Its function is as follows. DNA-dependent RNA polymerase catalyzes the transcription of DNA into RNA using the four ribonucleoside triphosphates as substrates. The polypeptide is DNA-directed RNA polymerase subunit beta (Neisseria gonorrhoeae (strain NCCP11945)).